The sequence spans 440 residues: L-gulonolactone oxidase (440 aa).

The FAD-binding PCMH-type domain maps to 17 to 187 (YGCSPEMYYQ…LTVTLQCVPQ (171 aa)). Position 54 is a pros-8alpha-FAD histidine (histidine 54). Residues 251-273 (IGFYLLEFLLWTSTYLPRLVGWI) traverse the membrane as a helical segment.

This sequence belongs to the oxygen-dependent FAD-linked oxidoreductase family. FAD is required as a cofactor. Highly expressed in liver.

Its subcellular location is the microsome membrane. It localises to the endoplasmic reticulum membrane. The enzyme catalyses L-gulono-1,4-lactone + O2 = L-ascorbate + H2O2 + H(+). It participates in cofactor biosynthesis; L-ascorbate biosynthesis via UDP-alpha-D-glucuronate pathway; L-ascorbate from UDP-alpha-D-glucuronate: step 4/4. Functionally, oxidizes L-gulono-1,4-lactone to hydrogen peroxide and L-xylo-hexulonolactone which spontaneously isomerizes to L-ascorbate. This Mus musculus (Mouse) protein is L-gulonolactone oxidase (Gulo).